Consider the following 177-residue polypeptide: Translation initiation factor IF-3 (177 aa).

Belongs to the IF-3 family. In terms of assembly, monomer.

It is found in the cytoplasm. Functionally, IF-3 binds to the 30S ribosomal subunit and shifts the equilibrium between 70S ribosomes and their 50S and 30S subunits in favor of the free subunits, thus enhancing the availability of 30S subunits on which protein synthesis initiation begins. The protein is Translation initiation factor IF-3 of Nostoc punctiforme (strain ATCC 29133 / PCC 73102).